Here is a 319-residue protein sequence, read N- to C-terminus: MIGMIITATISVALIMVLLVLAGTFTWVERRLLGFVQERYGPNRVGPFGSLQWVADTVKILTKEDRPPPGADKLLYILAPAVAATPVLAGFGVVAIGDGWALSSVDVGLLFLLGMLGLTAYAAVLGAWASNNRFSLLGGMRAAAQMLAYEVFLGLSLMGVVMIAGSFSMAEIVEAQRGVWFVVLQPLGMALFTIAGIAAAHRLPFDLPESENDLIAGFITEYTGMSFGLFFLGEYLAVLLVSALAVTLFFGGWLGPWLPGPVWFGLKTAVIAVAFVWIRATLPRPRYDQLLSFAWKVALPLSLLNLMLTGIVVVARSAS.

The next 9 helical transmembrane spans lie at 1-21 (MIGM…LLVL), 77-97 (ILAP…VAIG), 107-127 (VGLL…VLGA), 147-167 (LAYE…AGSF), 179-199 (VWFV…GIAA), 214-234 (LIAG…FLGE), 238-258 (VLLV…GPWL), 262-282 (VWFG…RATL), and 293-313 (FAWK…GIVV).

The protein belongs to the complex I subunit 1 family. NDH-1 is composed of 14 different subunits. Subunits NuoA, H, J, K, L, M, N constitute the membrane sector of the complex.

Its subcellular location is the cell inner membrane. The enzyme catalyses a quinone + NADH + 5 H(+)(in) = a quinol + NAD(+) + 4 H(+)(out). Functionally, NDH-1 shuttles electrons from NADH, via FMN and iron-sulfur (Fe-S) centers, to quinones in the respiratory chain. The immediate electron acceptor for the enzyme in this species is believed to be ubiquinone. Couples the redox reaction to proton translocation (for every two electrons transferred, four hydrogen ions are translocated across the cytoplasmic membrane), and thus conserves the redox energy in a proton gradient. This subunit may bind ubiquinone. This Rhodopseudomonas palustris (strain ATCC BAA-98 / CGA009) protein is NADH-quinone oxidoreductase subunit H 2.